Consider the following 792-residue polypeptide: MRIPITLLQTYFSEPLSTKEILEACDHIGIEAEIENTTLYSFASVITAKILHTIPHPNADKLRVATLTDGEKEHQVVCGAPNCEAGLIVALALPGAKLFDSEGQAYTIKKSKLRGVESQGMCCGADELGLDELQIQERALLELPEATPLGEDLATVLGNTSLEISLTPNLGHCASFLGLAREICHVTQANLVIPKEFSFENLPTTALDMGNDPDICPFFSYVVITGISAQPSPIKLQESLQALKQKPINAIVDITNYIMLSLGQPLHAYDASHVALDSLRVEKLSTPESLTLLNGETVLLPSGVPVVRDDHSLLGLGGVMGAKAPSFQETTTTTVIKAAYFLPEALRASQKLLPIPSESAYRFTRGIDPQNVVPALQAAIHYILEIFPEATISPIYSSGEICRELKEVALRPKTLQRILGKSFSIEILSQKLQSLGFSTTPQETSLLVKVPSYRHDINEEIDLVEEICRTESWNIETQNPVSCYTPIYKLKRETAGFLANAGLQEFFTPDLLDPETVALTRKEKEEISLQGSKHTTVLRSSLLPGLLKSAATNLNRQAPSVQAFEIGTVYAKHGEQCQETQTLAILLTEDGESRSWLPKPSLSFYSLKGWVERLLYHHHLSIDALTLESSALCEFHPYQQGVLRIHKQSFATLGQVHPELAKKAQIKHPVFFAELNLDLLCKMLKKTTKLYKPYAIYPSSFRDLTLTVPEDIPANLLRQKLLHEGSKWLESVTIISIYQDKSLETRNKNVSLRLVFQDYERTLSNQDIEEEYCRLVALLNELLTDTKGTINS.

Residues 39–154 enclose the tRNA-binding domain; that stretch reads LYSFASVITA…EATPLGEDLA (116 aa). The region spanning 403 to 480 is the B5 domain; it reads RELKEVALRP…ESWNIETQNP (78 aa). 4 residues coordinate Mg(2+): Asp-456, Asp-462, Glu-465, and Glu-466. Positions 695–791 constitute an FDX-ACB domain; it reads AIYPSSFRDL…LLTDTKGTIN (97 aa).

This sequence belongs to the phenylalanyl-tRNA synthetase beta subunit family. Type 1 subfamily. In terms of assembly, tetramer of two alpha and two beta subunits. It depends on Mg(2+) as a cofactor.

Its subcellular location is the cytoplasm. It catalyses the reaction tRNA(Phe) + L-phenylalanine + ATP = L-phenylalanyl-tRNA(Phe) + AMP + diphosphate + H(+). The polypeptide is Phenylalanine--tRNA ligase beta subunit (pheT) (Chlamydia pneumoniae (Chlamydophila pneumoniae)).